A 262-amino-acid polypeptide reads, in one-letter code: Inner membrane protein YcfZ (262 aa).

Topologically, residues 1-4 (MKKF) are cytoplasmic. The helical transmembrane segment at 5 to 27 (IILLSLLILLPLTAASKPLIPIM) threads the bilayer. Over 28 to 182 (KTLFTDVTGT…HENAPPGSTN (155 aa)) the chain is Periplasmic. The chain crosses the membrane as a helical span at residues 183–202 (TLGFIAWAATFILFSRIFYY). The Cytoplasmic segment spans residues 203–206 (TTRF). The chain crosses the membrane as a helical span at residues 207-229 (IYALKFAVAMTIANMGYQALCLY). Topologically, residues 230–238 (IDNSFAITR) are periplasmic. Residues 239-258 (ISPLWAGLIGVCTFIAALLL) traverse the membrane as a helical segment. Topologically, residues 259–262 (TSKR) are cytoplasmic.

Its subcellular location is the cell inner membrane. The sequence is that of Inner membrane protein YcfZ (ycfZ) from Escherichia coli (strain K12).